We begin with the raw amino-acid sequence, 546 residues long: Chaperonin GroEL (546 aa).

ATP is bound by residues T30–P33, K51, D87–T91, G415, and D495.

It belongs to the chaperonin (HSP60) family. In terms of assembly, forms a cylinder of 14 subunits composed of two heptameric rings stacked back-to-back. Interacts with the co-chaperonin GroES.

It localises to the cytoplasm. The catalysed reaction is ATP + H2O + a folded polypeptide = ADP + phosphate + an unfolded polypeptide.. Functionally, together with its co-chaperonin GroES, plays an essential role in assisting protein folding. The GroEL-GroES system forms a nano-cage that allows encapsulation of the non-native substrate proteins and provides a physical environment optimized to promote and accelerate protein folding. In Brucella suis (strain ATCC 23445 / NCTC 10510), this protein is Chaperonin GroEL.